The sequence spans 295 residues: UDP-N-acetylenolpyruvoylglucosamine reductase (295 aa).

One can recognise an FAD-binding PCMH-type domain in the interval 23 to 188 (QVGGPADFLA…ISAKFALKPG (166 aa)). Arg-167 is a catalytic residue. The Proton donor role is filled by Ser-217. The active site involves Glu-287.

The protein belongs to the MurB family. FAD serves as cofactor.

Its subcellular location is the cytoplasm. It carries out the reaction UDP-N-acetyl-alpha-D-muramate + NADP(+) = UDP-N-acetyl-3-O-(1-carboxyvinyl)-alpha-D-glucosamine + NADPH + H(+). Its pathway is cell wall biogenesis; peptidoglycan biosynthesis. Functionally, cell wall formation. This Streptococcus equi subsp. equi (strain 4047) protein is UDP-N-acetylenolpyruvoylglucosamine reductase.